A 109-amino-acid polypeptide reads, in one-letter code: Parvalbumin alpha (109 aa).

EF-hand domains are found at residues 38 to 73 (KSKE…FTPE) and 77 to 109 (LSDK…VSES). 11 residues coordinate Ca(2+): aspartate 51, aspartate 53, serine 55, phenylalanine 57, glutamate 59, glutamate 62, aspartate 90, aspartate 92, aspartate 94, lysine 96, and glutamate 101.

It belongs to the parvalbumin family.

Its function is as follows. In muscle, parvalbumin is thought to be involved in relaxation after contraction. It binds two calcium ions. The chain is Parvalbumin alpha from Pelophylax lessonae (Pool frog).